Here is a 107-residue protein sequence, read N- to C-terminus: Ribonuclease P protein component 4 (107 aa).

Zn(2+) contacts are provided by Cys-62, Cys-65, Cys-87, and Cys-90.

It belongs to the eukaryotic/archaeal RNase P protein component 4 family. Consists of a catalytic RNA component and at least 4-5 protein subunits. It depends on Zn(2+) as a cofactor.

The protein resides in the cytoplasm. The enzyme catalyses Endonucleolytic cleavage of RNA, removing 5'-extranucleotides from tRNA precursor.. In terms of biological role, part of ribonuclease P, a protein complex that generates mature tRNA molecules by cleaving their 5'-ends. This chain is Ribonuclease P protein component 4, found in Archaeoglobus fulgidus (strain ATCC 49558 / DSM 4304 / JCM 9628 / NBRC 100126 / VC-16).